We begin with the raw amino-acid sequence, 430 residues long: Enolase (430 aa).

Gln-167 contributes to the (2R)-2-phosphoglycerate binding site. The active-site Proton donor is Glu-209. Asp-245, Glu-286, and Asp-313 together coordinate Mg(2+). Residues Lys-338, Arg-367, Ser-368, and Lys-389 each coordinate (2R)-2-phosphoglycerate. Catalysis depends on Lys-338, which acts as the Proton acceptor.

Belongs to the enolase family. Mg(2+) serves as cofactor.

Its subcellular location is the cytoplasm. The protein localises to the secreted. It is found in the cell surface. It catalyses the reaction (2R)-2-phosphoglycerate = phosphoenolpyruvate + H2O. The protein operates within carbohydrate degradation; glycolysis; pyruvate from D-glyceraldehyde 3-phosphate: step 4/5. In terms of biological role, catalyzes the reversible conversion of 2-phosphoglycerate (2-PG) into phosphoenolpyruvate (PEP). It is essential for the degradation of carbohydrates via glycolysis. The chain is Enolase from Synechococcus sp. (strain CC9605).